The following is a 270-amino-acid chain: Putative phosphoenolpyruvate synthase regulatory protein (270 aa).

150 to 157 (GVSRCGKT) provides a ligand contact to ADP.

It belongs to the pyruvate, phosphate/water dikinase regulatory protein family. PSRP subfamily.

It carries out the reaction [pyruvate, water dikinase] + ADP = [pyruvate, water dikinase]-phosphate + AMP + H(+). It catalyses the reaction [pyruvate, water dikinase]-phosphate + phosphate + H(+) = [pyruvate, water dikinase] + diphosphate. Functionally, bifunctional serine/threonine kinase and phosphorylase involved in the regulation of the phosphoenolpyruvate synthase (PEPS) by catalyzing its phosphorylation/dephosphorylation. The polypeptide is Putative phosphoenolpyruvate synthase regulatory protein (Shewanella frigidimarina (strain NCIMB 400)).